The sequence spans 506 residues: 2,3-bisphosphoglycerate-independent phosphoglycerate mutase (506 aa).

Positions 12 and 63 each coordinate Mn(2+). Catalysis depends on S63, which acts as the Phosphoserine intermediate. Substrate is bound by residues H122, 151–152, R182, R188, 253–256, and K323; these read RD and RADR. Mn(2+) contacts are provided by D390, H394, D432, H433, and H451.

It belongs to the BPG-independent phosphoglycerate mutase family. Monomer. Requires Mn(2+) as cofactor.

The catalysed reaction is (2R)-2-phosphoglycerate = (2R)-3-phosphoglycerate. Its pathway is carbohydrate degradation; glycolysis; pyruvate from D-glyceraldehyde 3-phosphate: step 3/5. Catalyzes the interconversion of 2-phosphoglycerate and 3-phosphoglycerate. In Wolbachia pipientis wMel, this protein is 2,3-bisphosphoglycerate-independent phosphoglycerate mutase.